Here is a 255-residue protein sequence, read N- to C-terminus: MEALLVLPLLLLLSAGPCAPQLLGIRGDALEKSCLQLPLDCDDIYAQGYQADGVYLIYPSGPSVPVPVFCDMTTEGGKWTVFQKRFNGSVSFFRGWNDYKLGFGRADGEYWLGLQNMHLLTLKQKYELRVDLEDFENNTAFAKYADFSISPNAVSAEEDGYTLYVSGFEDGGAGDSLTYHSGQKFSTFDRDQDLFVQNCAALSSGAFWFRSCHFANLNGFYLGGSHLSYANGINWAQWKGFYYSLKRTEMKIRRA.

The first 20 residues, 1 to 20 (MEALLVLPLLLLLSAGPCAP), serve as a signal peptide directing secretion. The short motif at 26–28 (RGD) is the Cell attachment site element. The 224-residue stretch at 32–255 (KSCLQLPLDC…KRTEMKIRRA (224 aa)) folds into the Fibrinogen C-terminal domain. N-linked (GlcNAc...) asparagine glycosylation is found at N87 and N137.

As to quaternary structure, homodimer. Can also form higher oligomers. Interacts with FBN1, FBN2 and LOX. Interacts with COL1A1 in a Ca (2+)-dependent manner. Interacts with ELN in a Ca (2+)-dependent manner; this interaction promotes ELN self-assembly.

The protein localises to the secreted. It localises to the extracellular space. Its subcellular location is the extracellular matrix. Functionally, could be involved in calcium-dependent cell adhesion or intercellular interactions. May contribute to the elastic fiber assembly and/or maintenance. This chain is Microfibril-associated glycoprotein 4 (MFAP4), found in Bos taurus (Bovine).